The following is a 940-amino-acid chain: Isoleucine--tRNA ligase (940 aa).

A 'HIGH' region motif is present at residues 58–68 (PYANGSIHIGH). Glu-564 lines the L-isoleucyl-5'-AMP pocket. Residues 605 to 609 (KMSKS) carry the 'KMSKS' region motif. Lys-608 contributes to the ATP binding site. Zn(2+) is bound by residues Cys-903, Cys-906, Cys-923, and Cys-926.

Belongs to the class-I aminoacyl-tRNA synthetase family. IleS type 1 subfamily. Monomer. Zn(2+) serves as cofactor.

It localises to the cytoplasm. It catalyses the reaction tRNA(Ile) + L-isoleucine + ATP = L-isoleucyl-tRNA(Ile) + AMP + diphosphate. Functionally, catalyzes the attachment of isoleucine to tRNA(Ile). As IleRS can inadvertently accommodate and process structurally similar amino acids such as valine, to avoid such errors it has two additional distinct tRNA(Ile)-dependent editing activities. One activity is designated as 'pretransfer' editing and involves the hydrolysis of activated Val-AMP. The other activity is designated 'posttransfer' editing and involves deacylation of mischarged Val-tRNA(Ile). The protein is Isoleucine--tRNA ligase of Shewanella sediminis (strain HAW-EB3).